We begin with the raw amino-acid sequence, 302 residues long: Oxygen-dependent coproporphyrinogen-III oxidase (302 aa).

S94 lines the substrate pocket. Positions 98 and 108 each coordinate a divalent metal cation. H108 (proton donor) is an active-site residue. 110 to 112 (NVR) provides a ligand contact to substrate. H147 and H177 together coordinate a divalent metal cation. Residues 242-277 (YVEFNLVYDRGTLFGLQTGGRTESILMSMPPLVRWQ) form an important for dimerization region. 260 to 262 (GGR) provides a ligand contact to substrate.

It belongs to the aerobic coproporphyrinogen-III oxidase family. Homodimer. A divalent metal cation is required as a cofactor.

The protein localises to the cytoplasm. It catalyses the reaction coproporphyrinogen III + O2 + 2 H(+) = protoporphyrinogen IX + 2 CO2 + 2 H2O. Its pathway is porphyrin-containing compound metabolism; protoporphyrin-IX biosynthesis; protoporphyrinogen-IX from coproporphyrinogen-III (O2 route): step 1/1. Involved in the heme biosynthesis. Catalyzes the aerobic oxidative decarboxylation of propionate groups of rings A and B of coproporphyrinogen-III to yield the vinyl groups in protoporphyrinogen-IX. The chain is Oxygen-dependent coproporphyrinogen-III oxidase from Shewanella sp. (strain MR-4).